A 757-amino-acid polypeptide reads, in one-letter code: Ecdysone receptor (757 aa).

The modulating stretch occupies residues 1–300; it reads MMKRRWSNNG…GPAPRLQEEL (300 aa). Disordered regions lie at residues 126 to 192 and 235 to 289; these read NSVG…GGGG and LNHH…KKIK. The span at 128–138 shows a compositional bias: gly residues; sequence VGGGGGGGGVP. The segment covering 167 to 183 has biased composition (low complexity); the sequence is NSNSNHSNSSSHHTNGH. 2 consecutive NR C4-type zinc fingers follow at residues 301–321 and 337–361; these read CLVCGDRASGYHYNALTCEGC and CKFGHACEMDMYMRRKCQECRLKKC. The nuclear receptor DNA-binding region spans 301-373; sequence CLVCGDRASG…VGMRPECVVP (73 aa). The region spanning 442–677 is the NR LBD domain; the sequence is NQLAVIYKLI…FLEEIWDVHA (236 aa). The segment covering 717–734 has biased composition (low complexity); it reads TSMATSSSSSLSPSAAST. Residues 717 to 739 are disordered; sequence TSMATSSSSSLSPSAASTPNGGA.

The protein belongs to the nuclear hormone receptor family. NR1 subfamily.

The protein localises to the nucleus. Functionally, receptor for ecdysone. Binds to ecdysone response elements (ECRES). The protein is Ecdysone receptor (EcR) of Lucilia cuprina (Green bottle fly).